We begin with the raw amino-acid sequence, 272 residues long: 4-hydroxy-tetrahydrodipicolinate reductase (272 aa).

Residues 10–15 (GAGGRM), Glu-36, 100–102 (GTT), and 124–127 (SGNM) each bind NAD(+). Residue His-157 is the Proton donor/acceptor of the active site. His-158 contributes to the (S)-2,3,4,5-tetrahydrodipicolinate binding site. Catalysis depends on Lys-161, which acts as the Proton donor. 167–168 (GT) provides a ligand contact to (S)-2,3,4,5-tetrahydrodipicolinate.

Belongs to the DapB family.

It localises to the cytoplasm. The catalysed reaction is (S)-2,3,4,5-tetrahydrodipicolinate + NAD(+) + H2O = (2S,4S)-4-hydroxy-2,3,4,5-tetrahydrodipicolinate + NADH + H(+). It catalyses the reaction (S)-2,3,4,5-tetrahydrodipicolinate + NADP(+) + H2O = (2S,4S)-4-hydroxy-2,3,4,5-tetrahydrodipicolinate + NADPH + H(+). It functions in the pathway amino-acid biosynthesis; L-lysine biosynthesis via DAP pathway; (S)-tetrahydrodipicolinate from L-aspartate: step 4/4. Catalyzes the conversion of 4-hydroxy-tetrahydrodipicolinate (HTPA) to tetrahydrodipicolinate. The protein is 4-hydroxy-tetrahydrodipicolinate reductase of Bradyrhizobium sp. (strain ORS 278).